The primary structure comprises 490 residues: N-succinylglutamate 5-semialdehyde dehydrogenase (490 aa).

Residue 220–225 (GSANTG) participates in NAD(+) binding. Active-site residues include glutamate 243 and cysteine 277.

It belongs to the aldehyde dehydrogenase family. AstD subfamily.

It carries out the reaction N-succinyl-L-glutamate 5-semialdehyde + NAD(+) + H2O = N-succinyl-L-glutamate + NADH + 2 H(+). It participates in amino-acid degradation; L-arginine degradation via AST pathway; L-glutamate and succinate from L-arginine: step 4/5. Functionally, catalyzes the NAD-dependent reduction of succinylglutamate semialdehyde into succinylglutamate. This is N-succinylglutamate 5-semialdehyde dehydrogenase from Shigella dysenteriae serotype 1 (strain Sd197).